A 239-amino-acid polypeptide reads, in one-letter code: MSSPITPLSPGCVMLPARPEPVPVDPKTTAVIVIDMQNAYASPGGYLDLAGFDISGAAKVIHEIKGVLEVARSAGMQVIYFQNGWDDQYVEAGGPGSPNWWKSNALKTMRAKPELQGKLLARGQWDYELVDELKPQPGDIQLHKTRYSGFFNSQLDSVLRARGIRHLVFVGIATNVCVESTLRDGFFLEYFGTVLEDATHQAGPEFVQKAALFNIESFFGWVSTTADFKGTFGQLAPRT.

The active-site Proton acceptor is Asp-35. Lys-144 is a catalytic residue. The Nucleophile role is filled by Cys-177.

This sequence belongs to the isochorismatase family. RutB subfamily.

It carries out the reaction (Z)-3-ureidoacrylate + H2O + H(+) = (Z)-3-aminoacrylate + NH4(+) + CO2. It catalyses the reaction (Z)-3-ureidoacrylate + H2O = (Z)-3-aminoacrylate + carbamate + H(+). The enzyme catalyses (Z)-2-methylureidoacrylate + H2O + H(+) = (Z)-2-methylaminoacrylate + NH4(+) + CO2. Its function is as follows. Hydrolyzes ureidoacrylate to form aminoacrylate and carbamate. The carbamate hydrolyzes spontaneously, thereby releasing one of the nitrogen atoms of the pyrimidine ring as ammonia and one of its carbon atoms as CO2. This is Ureidoacrylate amidohydrolase RutB from Caulobacter segnis (strain ATCC 21756 / DSM 7131 / JCM 7823 / NBRC 15250 / LMG 17158 / TK0059) (Mycoplana segnis).